The sequence spans 223 residues: Phosphoribosylformylglycinamidine synthase subunit PurQ (223 aa).

The 220-residue stretch at 4–223 folds into the Glutamine amidotransferase type-1 domain; that stretch reads FAVVVFPGTN…FRSMVEWARK (220 aa). C85 (nucleophile) is an active-site residue. Catalysis depends on residues H196 and E198.

In terms of assembly, part of the FGAM synthase complex composed of 1 PurL, 1 PurQ and 2 PurS subunits.

It is found in the cytoplasm. The catalysed reaction is N(2)-formyl-N(1)-(5-phospho-beta-D-ribosyl)glycinamide + L-glutamine + ATP + H2O = 2-formamido-N(1)-(5-O-phospho-beta-D-ribosyl)acetamidine + L-glutamate + ADP + phosphate + H(+). The enzyme catalyses L-glutamine + H2O = L-glutamate + NH4(+). The protein operates within purine metabolism; IMP biosynthesis via de novo pathway; 5-amino-1-(5-phospho-D-ribosyl)imidazole from N(2)-formyl-N(1)-(5-phospho-D-ribosyl)glycinamide: step 1/2. Part of the phosphoribosylformylglycinamidine synthase complex involved in the purines biosynthetic pathway. Catalyzes the ATP-dependent conversion of formylglycinamide ribonucleotide (FGAR) and glutamine to yield formylglycinamidine ribonucleotide (FGAM) and glutamate. The FGAM synthase complex is composed of three subunits. PurQ produces an ammonia molecule by converting glutamine to glutamate. PurL transfers the ammonia molecule to FGAR to form FGAM in an ATP-dependent manner. PurS interacts with PurQ and PurL and is thought to assist in the transfer of the ammonia molecule from PurQ to PurL. This is Phosphoribosylformylglycinamidine synthase subunit PurQ from Thermococcus kodakarensis (strain ATCC BAA-918 / JCM 12380 / KOD1) (Pyrococcus kodakaraensis (strain KOD1)).